The sequence spans 564 residues: Putative ABC transporter ATP-binding protein PBPRA2240 (564 aa).

ABC transporter domains lie at 3–244 (IEFS…GIRE) and 299–533 (LTVN…ANLT). Residues 37–44 (GPSGSGKS) and 332–339 (GKNGSGKS) contribute to the ATP site.

The protein belongs to the ABC transporter superfamily.

It localises to the cell inner membrane. Functionally, probably part of an ABC transporter complex. Responsible for energy coupling to the transport system. The polypeptide is Putative ABC transporter ATP-binding protein PBPRA2240 (Photobacterium profundum (strain SS9)).